The following is a 250-amino-acid chain: Phosphoribosylaminoimidazole-succinocarboxamide synthase (250 aa).

The protein belongs to the SAICAR synthetase family.

The enzyme catalyses 5-amino-1-(5-phospho-D-ribosyl)imidazole-4-carboxylate + L-aspartate + ATP = (2S)-2-[5-amino-1-(5-phospho-beta-D-ribosyl)imidazole-4-carboxamido]succinate + ADP + phosphate + 2 H(+). Its pathway is purine metabolism; IMP biosynthesis via de novo pathway; 5-amino-1-(5-phospho-D-ribosyl)imidazole-4-carboxamide from 5-amino-1-(5-phospho-D-ribosyl)imidazole-4-carboxylate: step 1/2. This Synechococcus sp. (strain CC9605) protein is Phosphoribosylaminoimidazole-succinocarboxamide synthase.